Consider the following 540-residue polypeptide: Phenylalanine--tRNA ligase beta subunit (540 aa).

The B5 domain maps to 266–342; that stretch reads LRPEKRTVSV…IAYGYDKIET (77 aa). Residues Asp320, Asp326, Glu329, and Asp330 each contribute to the Mg(2+) site.

Belongs to the phenylalanyl-tRNA synthetase beta subunit family. Type 2 subfamily. Tetramer of two alpha and two beta subunits. The cofactor is Mg(2+).

The protein localises to the cytoplasm. It catalyses the reaction tRNA(Phe) + L-phenylalanine + ATP = L-phenylalanyl-tRNA(Phe) + AMP + diphosphate + H(+). The chain is Phenylalanine--tRNA ligase beta subunit from Methanocorpusculum labreanum (strain ATCC 43576 / DSM 4855 / Z).